A 196-amino-acid polypeptide reads, in one-letter code: dTTP/UTP pyrophosphatase (196 aa).

The active-site Proton acceptor is D77.

This sequence belongs to the Maf family. YhdE subfamily. The cofactor is a divalent metal cation.

The protein localises to the cytoplasm. The catalysed reaction is dTTP + H2O = dTMP + diphosphate + H(+). It catalyses the reaction UTP + H2O = UMP + diphosphate + H(+). Its function is as follows. Nucleoside triphosphate pyrophosphatase that hydrolyzes dTTP and UTP. May have a dual role in cell division arrest and in preventing the incorporation of modified nucleotides into cellular nucleic acids. In Christiangramia forsetii (strain DSM 17595 / CGMCC 1.15422 / KT0803) (Gramella forsetii), this protein is dTTP/UTP pyrophosphatase.